Consider the following 180-residue polypeptide: ATP-dependent protease subunit HslV (180 aa).

The active site involves threonine 5. Residues glycine 161, cysteine 164, and threonine 167 each coordinate Na(+).

It belongs to the peptidase T1B family. HslV subfamily. In terms of assembly, a double ring-shaped homohexamer of HslV is capped on each side by a ring-shaped HslU homohexamer. The assembly of the HslU/HslV complex is dependent on binding of ATP.

It is found in the cytoplasm. The catalysed reaction is ATP-dependent cleavage of peptide bonds with broad specificity.. With respect to regulation, allosterically activated by HslU binding. Its function is as follows. Protease subunit of a proteasome-like degradation complex believed to be a general protein degrading machinery. This is ATP-dependent protease subunit HslV from Campylobacter curvus (strain 525.92).